An 80-amino-acid chain; its full sequence is UPF0248 protein YG5714_2801 (80 aa).

The protein belongs to the UPF0248 family.

The sequence is that of UPF0248 protein YG5714_2801 from Saccharolobus islandicus (strain Y.G.57.14 / Yellowstone #1) (Sulfolobus islandicus).